A 477-amino-acid chain; its full sequence is ETS translocation variant 1 (477 aa).

At Ser94 the chain carries Phosphoserine. A disordered region spans residues 128–179 (PQVGMRPSNPPTPSSTPVSPLHHASPNSTHTPKPDRAFPAHLPPSQSIPDSS). A phosphoserine; by RPS6KA1 and RPS6KA5 mark is found at Ser191 and Ser216. Residue Lys317 forms a Glycyl lysine isopeptide (Lys-Gly) (interchain with G-Cter in SUMO2) linkage. Positions 335–415 (LQLWQFLVAL…AGERYVYKFV (81 aa)) form a DNA-binding region, ETS.

This sequence belongs to the ETS family. In terms of processing, sumoylated. Phosphorylated at Ser-191 and Ser-216 by RPS6KA1 and RPS6KA5; phosphorylation activates transcriptional activity. In terms of tissue distribution, very highly expressed in brain, highly expressed in testis, lung and heart, moderately in spleen, small intestine, pancreas and colon, weakly in liver, prostate and thymus, very weakly in skeletal muscle, kidney and ovary and not in placenta and peripheral blood leukocytes.

Its subcellular location is the nucleus. Its function is as follows. Transcriptional activator that binds to DNA sequences containing the consensus pentanucleotide 5'-CGGA[AT]-3'. Required for olfactory dopaminergic neuron differentiation; may directly activate expression of tyrosine hydroxylase (TH). In Homo sapiens (Human), this protein is ETS translocation variant 1.